A 401-amino-acid chain; its full sequence is Ureide permease 4 (401 aa).

Topologically, residues 1-10 (MYVVESKAGA) are extracellular. The helical transmembrane segment at 11–31 (IGCMILSLCCLGSWPAILTLL) threads the bilayer. Residues 32 to 40 (ERRGRLPQH) are Cytoplasmic-facing. Residues 41-61 (TFLDFATANLLAAIVIAFSLG) traverse the membrane as a helical segment. The Extracellular segment spans residues 62-81 (EIGKSTFLKPDFTTQLPQDN). The chain crosses the membrane as a helical span at residues 82–102 (WPSVLLAVAGGVLLSIGNLAT). The Cytoplasmic portion of the chain corresponds to 103–104 (QY). A helical transmembrane segment spans residues 105–125 (AFAFVGLSVTEVITASITVVI). The Extracellular segment spans residues 126–141 (GTTLNYFLDNKINKAE). The helical transmembrane segment at 142–162 (ILFPGVGCFLIAVFLGAAVHA) threads the bilayer. At 163 to 231 (SNAADVKEKL…KRAIKVFGKS (69 aa)) the chain is on the cytoplasmic side. An ATP-binding site is contributed by 224–231 (AIKVFGKS). The chain crosses the membrane as a helical span at residues 232-252 (IMIGLFITLFAGISLSLFSPA). Over 253–275 (FNLATNDQWSTLPKGVPKLVVYT) the chain is Extracellular. A helical transmembrane segment spans residues 276-296 (AFFYFSIAGFLISLILNLIFL). Residues 297-318 (YRPMVGLARSSLKKYIYDSKGR) lie on the Cytoplasmic side of the membrane. Residues 319–339 (GWAVFAGFLCGFGNGLQFMGG) form a helical membrane-spanning segment. Residues 340–344 (QAAGY) lie on the Extracellular side of the membrane. A helical membrane pass occupies residues 345–365 (AAADSVQALPLVSTFWGIVLF). The Cytoplasmic portion of the chain corresponds to 366–374 (GEYRKSSKR). Residues 375–395 (TYALLVSMLAMFVAAVAILMA) traverse the membrane as a helical segment. Over 396 to 401 (SSGHRK) the chain is Extracellular.

The protein belongs to the plant ureide permease (TC 2.A.7.19) family. In terms of tissue distribution, expressed in developing seedlings, flower filaments and stigma, and the top and bottom parts of carpels in siliques.

The protein localises to the membrane. Its function is as follows. Proton-coupled transporter that transports a wide spectrum of oxo derivatives of heterocyclic nitrogen compounds. The protein is Ureide permease 4 of Arabidopsis thaliana (Mouse-ear cress).